A 104-amino-acid polypeptide reads, in one-letter code: ATP-dependent Clp protease adapter protein ClpS (104 aa).

It belongs to the ClpS family. As to quaternary structure, binds to the N-terminal domain of the chaperone ClpA.

In terms of biological role, involved in the modulation of the specificity of the ClpAP-mediated ATP-dependent protein degradation. The sequence is that of ATP-dependent Clp protease adapter protein ClpS from Neisseria gonorrhoeae (strain ATCC 700825 / FA 1090).